Consider the following 1138-residue polypeptide: Solute carrier family 12 member 5 (1138 aa).

Disordered regions lie at residues 1 to 62 (MSRR…KGRE) and 96 to 116 (QGSR…KPVQ). At 1 to 98 (MSRRFTVTSL…ANYTNLPQGS (98 aa)) the chain is on the cytoplasmic side. Over residues 21–45 (PESRRHSVADPRRLPREDVKGDGNP) the composition is skewed to basic and acidic residues. The span at 46–55 (KESSPFINST) shows a compositional bias: polar residues. T57 bears the Phosphothreonine mark. Residues 98–111 (SREHEEAENNEGGK) are compositionally biased toward basic and acidic residues. Residues 99–120 (REHEEAENNEGGKKKPVQAPRM) traverse the membrane as a discontinuously helical segment. Position 113 (K113) interacts with K(+). Over 121–129 (GTFMGVYLP) the chain is Extracellular. The chain crosses the membrane as a helical span at residues 130 to 151 (CLQNIFGVILFLRLTWVVGIAG). Over 152–174 (IMESFCMVFICCSCTMLTAISMS) the chain is Cytoplasmic. A helical transmembrane segment spans residues 175 to 203 (AIATNGVVPAGGSYYMISRSLGPEFGGAV). Residue A184 participates in chloride binding. Residues 204–229 (GLCFYLGTTFAGAMYILGTIEILLAY) are Extracellular-facing. The next 2 helical transmembrane spans lie at 230 to 250 (LFPA…AAML) and 251 to 276 (NNMR…KYVN). At 277-402 (KFALVFLGCV…ERRGMPSVGL (126 aa)) the chain is on the extracellular side. C310 and C325 are disulfide-bonded. N314, N333, N351, and N362 each carry an N-linked (GlcNAc...) asparagine glycan. A disulfide bond links C345 and C354. Residues 403-420 (ADGTPVDMDHPYVFSDMT) traverse the membrane as a helical segment. M410 is a K(+) binding site. Residues Y414 and V415 each contribute to the chloride site. Residues 421 to 429 (SYFTLLVGI) lie on the Cytoplasmic side of the membrane. A helical membrane pass occupies residues 430–453 (YFPSVTGIMAGSNRSGDLRDAQKS). D446 is a K(+) binding site. Residues 454-485 (IPTGTILAIATTSAVYISSVVLFGACIEGVVL) lie on the Extracellular side of the membrane. Residues 486 to 513 (RDKFGEAVNGNLVVGTLAWPSPWVIVIG) traverse the membrane as a helical segment. The Cytoplasmic portion of the chain corresponds to 514–534 (SFFSTCGAGLQSLTGAPRLLQ). 2 consecutive transmembrane segments (helical) span residues 535–555 (AISR…KANG) and 556–578 (EPTW…ASLD). Residue E569 participates in chloride binding. Topologically, residues 579–592 (EVAPILSMFFLMCY) are cytoplasmic. 2 helical membrane passes run 593–615 (MFVN…PRFR) and 616–632 (YYHW…CLAL). The Cytoplasmic portion of the chain corresponds to 633–1138 (MFICSWYYAL…GGREVITIYS (506 aa)). The scissor helix stretch occupies residues 667 to 681 (GIRGLSLSAARYALL). A Phosphothreonine; by OXSR1 and STK39 modification is found at T929. The disordered stretch occupies residues 943 to 1051 (HLTKNERERE…GPSPVSSEGI (109 aa)). Basic and acidic residues predominate over residues 945-962 (TKNEREREIQSITDESRG). Positions 982–994 (TACDNEEKPEEEV) are enriched in acidic residues. Over residues 1001–1012 (SAPSCPSSSPSP) the composition is skewed to low complexity. Positions 1019 to 1041 (ERETDPEVHLTWTKDKSVAEKNK) are enriched in basic and acidic residues. T1029 bears the Phosphothreonine; by OXSR1 and STK39 mark. S1044, S1047, and S1048 each carry phosphoserine.

It belongs to the SLC12A transporter family. K/Cl co-transporter subfamily. In terms of assembly, homodimer; adopts a domain-swap conformation at the scissor helices connecting the transmembrane domain and C-terminal domain. Heterodimer with K-Cl cotransporters SLC12A6 and SLC12A7. Interacts with AP2A1. Phosphorylated at Thr-929 and Thr-1029 by OXSR1/OSR1 and STK39/SPAK downstream of WNK kinases (WNK1, WNK2, WNK3 or WNK4), inhibiting the potassium-chloride cotransport activity. As to expression, expressed in brainstem, spinal cord and olfactory bulb of 17 dpc embryos. Expressed in all parts of the brain and spinal cord in postnatal day 14 mice. Expressed in brainstem and spinal cord of 17 dpc embryos. Expressed in all parts of the brain and spinal cord in postnatal day 14 mice.

The protein resides in the cell membrane. The protein localises to the cell projection. Its subcellular location is the dendrite. The catalysed reaction is K(+)(in) + chloride(in) = K(+)(out) + chloride(out). Its activity is regulated as follows. Inhibited following phosphorylation by OXSR1/OSR1 and STK39/SPAK: phosphorylation takes place downstream of WNK kinases (WNK1, WNK2, WNK3 or WNK4) in response to hyperosmotic stress and subsequent cell shrinkage. In terms of biological role, mediates electroneutral potassium-chloride cotransport in mature neurons and is required for neuronal Cl(-) homeostasis. As major extruder of intracellular chloride, it establishes the low neuronal Cl(-) levels required for chloride influx after binding of GABA-A and glycine to their receptors, with subsequent hyperpolarization and neuronal inhibition. Involved in the regulation of dendritic spine formation and maturation. This is Solute carrier family 12 member 5 (Slc12a5) from Mus musculus (Mouse).